A 689-amino-acid chain; its full sequence is Methionine--tRNA ligase (689 aa).

A 'HIGH' region motif is present at residues 16-26 (PYANAGLHLGH). Residues Cys147, Cys150, Cys160, and Cys163 each contribute to the Zn(2+) site. The 'KMSKS' region motif lies at 342 to 346 (KMSKS). Position 345 (Lys345) interacts with ATP. A tRNA-binding domain is found at 585–689 (DFAKVDLRVG…AGVKPGMRVG (105 aa)).

It belongs to the class-I aminoacyl-tRNA synthetase family. MetG type 1 subfamily. In terms of assembly, homodimer. Requires Zn(2+) as cofactor.

The protein resides in the cytoplasm. The catalysed reaction is tRNA(Met) + L-methionine + ATP = L-methionyl-tRNA(Met) + AMP + diphosphate. Its function is as follows. Is required not only for elongation of protein synthesis but also for the initiation of all mRNA translation through initiator tRNA(fMet) aminoacylation. The polypeptide is Methionine--tRNA ligase (Chromobacterium violaceum (strain ATCC 12472 / DSM 30191 / JCM 1249 / CCUG 213 / NBRC 12614 / NCIMB 9131 / NCTC 9757 / MK)).